A 244-amino-acid chain; its full sequence is AA9 family lytic polysaccharide monooxygenase B (244 aa).

The N-terminal stretch at 1–19 (MFLVPLLAALSLSAPKVAA) is a signal peptide. Histidine 20 lines the Cu(2+) pocket. Tyrosine 39 is a binding site for (1,4-beta-D-glucosyl)n. 2 disulfides stabilise this stretch: cysteine 68/cysteine 189 and cysteine 111/cysteine 115. Position 99 (histidine 99) interacts with Cu(2+). Asparagine 152 carries N-linked (GlcNAc...) asparagine glycosylation. O2-binding residues include histidine 178 and glutamine 184. Residue tyrosine 186 participates in Cu(2+) binding. (1,4-beta-D-glucosyl)n contacts are provided by aspartate 224, tyrosine 226, and glutamate 229. N-linked (GlcNAc...) asparagine glycosylation occurs at asparagine 233.

The protein belongs to the polysaccharide monooxygenase AA9 family. Cu(2+) serves as cofactor.

Its subcellular location is the secreted. It carries out the reaction [(1-&gt;4)-beta-D-glucosyl]n+m + reduced acceptor + O2 = 4-dehydro-beta-D-glucosyl-[(1-&gt;4)-beta-D-glucosyl]n-1 + [(1-&gt;4)-beta-D-glucosyl]m + acceptor + H2O.. Functionally, lytic polysaccharide monooxygenase (LPMO) that depolymerizes crystalline and amorphous polysaccharides via the oxidation of scissile alpha- or beta-(1-4)-glycosidic bonds, yielding specifically C1 oxidation product. Catalysis by LPMOs requires the reduction of the active-site copper from Cu(II) to Cu(I) by a reducing agent and H(2)O(2) or O(2) as a cosubstrate. Displays catalytic activity on insoluble cellulose using I-beta microfibril model substrate. This Heterobasidion irregulare (strain TC 32-1) protein is AA9 family lytic polysaccharide monooxygenase B.